Consider the following 137-residue polypeptide: Large ribosomal subunit protein uL16 (137 aa).

This sequence belongs to the universal ribosomal protein uL16 family. As to quaternary structure, part of the 50S ribosomal subunit.

Binds 23S rRNA and is also seen to make contacts with the A and possibly P site tRNAs. This is Large ribosomal subunit protein uL16 from Stutzerimonas stutzeri (strain A1501) (Pseudomonas stutzeri).